A 191-amino-acid chain; its full sequence is Calcium and integrin-binding protein 1 (191 aa).

A lipid anchor (N-myristoyl glycine) is attached at G2. EF-hand domains are found at residues 103-138 and 148-183; these read TPDIKSHYAFRIFDFDDDGTLDREDLSQLVNCLTGE and EMKQLIDNILEESDIDRDGTINLSEFQHVISRSPDF. D116, D118, D120, T122, D127, D161, D163, D165, T167, and E172 together coordinate Ca(2+).

In terms of assembly, monomer. Interacts with the heterodimeric integrin alpha-IIb/beta3 (ITGA2B-ITGB3). Interacts with ITGA2B (via cytoplasmic domain); the interaction is direct and calcium-dependent. Interacts with the protein kinases PLK2/SNK and PRKDC (via the region immediately upstream of the kinase domain). Interacts with PLK3; the interaction inhibits PLK3 kinase activity. Interacts with PSEN2. Interacts (via C-terminus) with F8. Interacts with NBR1 (via C-terminus). Interacts with FEZ1 (via C-terminus). Interacts with UBR5 (via C-terminus); the interaction is sensitive to DNA damage, and may target CIB1 for ubiquitin-mediated degradation. Interacts with IFI6; the interaction is direct. Interacts with BCL2. Interacts with TAS1R2 (via C-terminus); the interaction is independent of the myristoylation state of CIB1. Interacts with ITPR3; the interaction occurs in a calcium dependent manner. Interacts with PTK2/FAK1. Interacts with MAP3K5; the interaction inhibits MAP3K5 activation by phosphorylation, and its subsequent interaction with TRAF2. Interacts (via C-terminal region) with STMN2 (via the N-terminal region); the interaction is direct, occurs in a calcium-dependent manner and attenuates the STMN2-induced neurite outgrowth inhibition. Interacts with SPHK1, the interaction occurs in a calcium-dependent manner. Interacts with ITGA2B (via C-terminal cytoplasmic tail); the interaction occurs upon platelet aggregation and is stabilized/increased in a calcium and magnesium-dependent manner. Interacts with PAK1 (via N-terminal region); the interaction is direct and occurs in a calcium-dependent manner. Interacts with RAC3 (via C-terminal region); the interaction induces their association with the cytoskeleton upon alpha-IIb/beta3 integrin-mediated adhesion. Interacts with ITGA5 and ITGAV. Interacts with MYO1C. Interacts with ITGA2B (via C-terminal cytoplasmic tail region). Interacts (via C-terminal region) with PPP3R1 isoform 1 and isoform 2; the interactions increase upon cardiomyocytes hypertrophy. Interacts with CACNA1C; the interaction increases upon cardiomyocytes hypertrophy. Interacts and forms a complex with TMC6 and TMC8; the interaction stabilizes each component of the complex. Expressed strongly in Sertoli cells, weakly in pachytene spermatocytes, round spermatids and condensing spermatids (at protein level). Expressed in testis. Expressed in cardiac myocytes and endothelial cells. Expressed in heart, liver, spleen, lung, kidney, brain and inner ear. In the inner ear, expressed in the vestibule, basilar membrane and spiral ganglion cells.

It localises to the membrane. The protein resides in the cell membrane. It is found in the sarcolemma. Its subcellular location is the apical cell membrane. The protein localises to the cell projection. It localises to the ruffle membrane. The protein resides in the filopodium tip. It is found in the growth cone. Its subcellular location is the lamellipodium. The protein localises to the cytoplasm. It localises to the cytoskeleton. The protein resides in the microtubule organizing center. It is found in the centrosome. Its subcellular location is the perinuclear region. The protein localises to the nucleus. It localises to the neuron projection. The protein resides in the perikaryon. In terms of biological role, calcium-binding protein that plays a role in the regulation of numerous cellular processes, such as cell differentiation, cell division, cell proliferation, cell migration, thrombosis, angiogenesis, cardiac hypertrophy and apoptosis. Involved in bone marrow megakaryocyte differentiation by negatively regulating thrombopoietin-mediated signaling pathway. Participates in the endomitotic cell cycle of megakaryocyte, a form of mitosis in which both karyokinesis and cytokinesis are interrupted. Plays a role in integrin signaling by negatively regulating alpha-IIb/beta3 activation in thrombin-stimulated megakaryocytes preventing platelet aggregation. Up-regulates PTK2/FAK1 activity, and is also needed for the recruitment of PTK2/FAK1 to focal adhesions; it thus appears to play an important role in focal adhesion formation. Positively regulates cell migration on fibronectin in a CDC42-dependent manner, the effect being negatively regulated by PAK1. Functions as a negative regulator of stress activated MAP kinase (MAPK) signaling pathways. Down-regulates inositol 1,4,5-trisphosphate receptor-dependent calcium signaling. Involved in sphingosine kinase SPHK1 translocation to the plasma membrane in a N-myristoylation-dependent manner preventing TNF-alpha-induced apoptosis. Regulates serine/threonine-protein kinase PLK3 activity for proper completion of cell division progression. Plays a role in microtubule (MT) dynamics during neuronal development; disrupts the MT depolymerization activity of STMN2 attenuating NGF-induced neurite outgrowth and the MT reorganization at the edge of lamellipodia. Promotes cardiomyocyte hypertrophy via activation of the calcineurin/NFAT signaling pathway. Stimulates calcineurin PPP3R1 activity by mediating its anchoring to the sarcolemma. In ischemia-induced (pathological or adaptive) angiogenesis, stimulates endothelial cell proliferation, migration and microvessel formation by activating the PAK1 and ERK1/ERK2 signaling pathway. Also promotes cancer cell survival and proliferation. May regulate cell cycle and differentiation of spermatogenic germ cells, and/or differentiation of supporting Sertoli cells. Forms a complex with TMC6/EVER1 and TMC8/EVER2 in lymphocytes and keratynocytes where CIB1 stabilizes TMC6 and TMC8 levels and reciprocally. The polypeptide is Calcium and integrin-binding protein 1 (Cib1) (Mus musculus (Mouse)).